We begin with the raw amino-acid sequence, 317 residues long: 2,3-dihydroxyphenylpropionate/2,3-dihydroxicinnamic acid 1,2-dioxygenase (317 aa).

His-115 (proton donor) is an active-site residue. His-179 (proton acceptor) is an active-site residue.

Belongs to the LigB/MhpB extradiol dioxygenase family. In terms of assembly, homotetramer. Requires Fe(2+) as cofactor.

It catalyses the reaction 3-(2,3-dihydroxyphenyl)propanoate + O2 = (2Z,4E)-2-hydroxy-6-oxonona-2,4-dienedioate + H(+). The catalysed reaction is (2E)-3-(2,3-dihydroxyphenyl)prop-2-enoate + O2 = (2Z,4E,7E)-2-hydroxy-6-oxonona-2,4,7-trienedioate + H(+). Its pathway is aromatic compound metabolism; 3-phenylpropanoate degradation. In terms of biological role, catalyzes the non-heme iron(II)-dependent oxidative cleavage of 2,3-dihydroxyphenylpropionic acid and 2,3-dihydroxicinnamic acid into 2-hydroxy-6-ketononadienedioate and 2-hydroxy-6-ketononatrienedioate, respectively. This Paraburkholderia phymatum (strain DSM 17167 / CIP 108236 / LMG 21445 / STM815) (Burkholderia phymatum) protein is 2,3-dihydroxyphenylpropionate/2,3-dihydroxicinnamic acid 1,2-dioxygenase.